The chain runs to 1081 residues: Probable sucrose-phosphate synthase 2 (1081 aa).

3 disordered regions span residues 116-152 (EQGR…PRGN), 239-267 (EPTE…EDLG), and 760-780 (IKRQ…GDVP). Positions 256 to 267 (EPEEEEEEEDLG) are enriched in acidic residues.

It belongs to the glycosyltransferase 1 family. As to quaternary structure, homodimer or homotetramer.

It carries out the reaction beta-D-fructose 6-phosphate + UDP-alpha-D-glucose = sucrose 6(F)-phosphate + UDP + H(+). Its pathway is glycan biosynthesis; sucrose biosynthesis; sucrose from D-fructose 6-phosphate and UDP-alpha-D-glucose: step 1/2. Its activity is regulated as follows. Activity is regulated by phosphorylation and moderated by concentration of metabolites and light. Plays a role in photosynthetic sucrose synthesis by catalyzing the rate-limiting step of sucrose biosynthesis from UDP-glucose and fructose- 6-phosphate. Involved in the regulation of carbon partitioning in the leaves of plants. May regulate the synthesis of sucrose and therefore play a major role as a limiting factor in the export of photoassimilates out of the leaf. Plays a role for sucrose availability that is essential for plant growth and fiber elongation. The sequence is that of Probable sucrose-phosphate synthase 2 (SPS2) from Craterostigma plantagineum (Blue gem).